Consider the following 132-residue polypeptide: Guanyl-specific ribonuclease C2 (132 aa).

A signal peptide spans 1-26; sequence MLYNKLITIAALLVPALAAPQGLDVR. 2 disulfide bridges follow: cysteine 28–cysteine 36 and cysteine 32–cysteine 129. The active site involves histidine 66. Glutamate 84 acts as the Proton acceptor in catalysis. The active-site Proton donor is histidine 118.

The protein belongs to the ribonuclease N1/T1 family.

Its subcellular location is the secreted. The catalysed reaction is [RNA] containing guanosine + H2O = an [RNA fragment]-3'-guanosine-3'-phosphate + a 5'-hydroxy-ribonucleotide-3'-[RNA fragment].. In Aspergillus clavatus (strain ATCC 1007 / CBS 513.65 / DSM 816 / NCTC 3887 / NRRL 1 / QM 1276 / 107), this protein is Guanyl-specific ribonuclease C2.